A 684-amino-acid polypeptide reads, in one-letter code: Amino-acid acetyltransferase, mitochondrial (684 aa).

The tract at residues 414 to 439 (PQDATNSASEPRDPSQLSTVATRRKR) is disordered. Over residues 415–434 (QDATNSASEPRDPSQLSTVA) the composition is skewed to polar residues. One can recognise an N-acetyltransferase domain in the interval 505-674 (GKSRMTLNDP…YEGVCRGIEP (170 aa)).

The protein belongs to the acetyltransferase family.

Its subcellular location is the mitochondrion. It catalyses the reaction L-glutamate + acetyl-CoA = N-acetyl-L-glutamate + CoA + H(+). The protein operates within amino-acid biosynthesis; L-arginine biosynthesis; N(2)-acetyl-L-ornithine from L-glutamate: step 1/4. Its function is as follows. N-acetylglutamate synthase involved in arginine biosynthesis. This Ajellomyces capsulatus (strain NAm1 / WU24) (Darling's disease fungus) protein is Amino-acid acetyltransferase, mitochondrial (ARG2).